Reading from the N-terminus, the 370-residue chain is Peptidyl-prolyl cis-trans isomerase D (370 aa).

The 166-residue stretch at 11–176 (FFDISADGKP…EDWIISDCGE (166 aa)) folds into the PPIase cyclophilin-type domain. 3 TPR repeats span residues 218–251 (VTTLKDIGTKQLKDGNVAAAYEKYNKASGFLNDY), 269–302 (LSCYLNAALVALKLKDGKKTINAASNALEVEAID), and 307–340 (TKALYRKGMGYLLAKDEESAQKSLEEALQLSPED).

The protein belongs to the cyclophilin-type PPIase family. PPIase D subfamily.

Its subcellular location is the cytoplasm. It catalyses the reaction [protein]-peptidylproline (omega=180) = [protein]-peptidylproline (omega=0). Its function is as follows. PPIases accelerate the folding of proteins. It catalyzes the cis-trans isomerization of proline imidic peptide bonds in oligopeptides. This Debaryomyces hansenii (strain ATCC 36239 / CBS 767 / BCRC 21394 / JCM 1990 / NBRC 0083 / IGC 2968) (Yeast) protein is Peptidyl-prolyl cis-trans isomerase D (CPR6).